Consider the following 201-residue polypeptide: Calcium channel flower (201 aa).

3 helical membrane passes run L37–I57, L59–A79, and P103–F120.

The protein belongs to the calcium channel flower family. In terms of assembly, homomultimer. Associates with the dally/ magu complex.

Its subcellular location is the cell membrane. It is found in the cytoplasmic vesicle. The protein localises to the secretory vesicle. It localises to the synaptic vesicle membrane. The protein resides in the presynaptic cell membrane. Its subcellular location is the endosome. With respect to regulation, channel activity is inhibited by La(3+), which reduces Ca(2+) influx and thus inhibits it's function in promoting activity-dependent bulk endocytosis (ADBE) in response to high stimuli. Its function is as follows. Transmembrane protein which mediates synaptic endocytosis, fitness-based cell culling, neuronal culling, morphogen gradient scaling, and calcium transport. Regulates synaptic endocytosis and hence couples exo- with endocytosis. Controls two major modes of synaptic vesicle (SV) endocytosis in the synaptic boutons of neuromuscular junctions (NMJs); Ca(2+) channel-independent Clathrin-mediated endocytosis (CME) in response to mild stimulation, and Ca(2+) channel-dependent activity-dependent bulk endocytosis (ADBE) in response to strong stimulation. Functions in ADBE and subsequent SV reformation from bulk endosomes by initiating Ca(2+) channel-dependent phosphatidylinositol 4,5-bisphosphate (PtdIns(4,5)P2) compartmentalization in synaptic boutons. There it acts at the periactive zone to provide the low Ca(2+) levels required to initiate Calcineurin activation and upregulate PtdIns(4,5)P2. Conversely PtdIns(4,5)P2 enhances fwe Ca(2+) channel-activity, establishing a positive feedback loop that induces PtdIns(4,5)P2 microdomain at the periactive zone. These microdomains trigger bulk membrane invagination (i.e. ADBE) by triggering actin polymerization while also promoting localization of fwe to bulk endosomes, thereby removing the ADBE trigger to reduce endocytosis and prevent excess membrane uptake. PtdIns(4,5)P2 then promotes SV reformation from the bulk endosomes, to coordinate ADBE and subsequent SV reformation. Different combinations of the flower isoforms at the cell membrane are also required for the identification and elimination of suboptimal or supernumerary cells during development, regeneration, and adulthood. Required for the recognition and elimination of unfit cells in the developing wing during cell competition. In the developing pupal retina, mediates the elimination of unwanted postmitotic neurons, including supernumerary photoreceptor neurons that form at the periphery of the retina and are contained within incomplete ommatidia units. Also required for efficient elimination and replacement of old neurons by newly generated neurons during regeneration in the adult brain following mechanical injury. Downstream of the flower fitness fingerprints, cells identified as unwanted or unfit are eliminated via apoptosis through the expression of ahuizotl (azot). However, the cells marked for elimination by the flower isoforms only undergo apoptosis if additional thresholds are met; (1) their neighboring fit/healthy cells express different levels of the fwe isoforms, and (2) the levels of the protective signal SPARC expressed by the loser or unwanted cells are unable to inhibit caspase activation. These additional thresholds for flower-mediated apoptosis, allows useful cells to recover from transient and limited stress before they are unnecessarily eliminated. Functions with dally and magu in a mechanism of scaling, which utilises apoptosis to ensure that the dpp morphogen gradient, which mediates organ growth, remains proportional to the size of the growing wing. In this mechanism, fwe represses dally- and Magu-dependent activity in expanding the gradient, and dally/Magu inhibits fwe-dependent apoptosis to keep cell death rate low. When the levels of these different proteins are optimally regulated the gradient correctly scales with organ growth but when this fails, fwe-mediated apoptosis is activated to trim the developing tissue to match the correct size of the gradient. This chain is Calcium channel flower, found in Drosophila willistoni (Fruit fly).